Consider the following 205-residue polypeptide: Putative 3-methyladenine DNA glycosylase (205 aa).

This sequence belongs to the DNA glycosylase MPG family.

The polypeptide is Putative 3-methyladenine DNA glycosylase (Bacillus cereus (strain Q1)).